The sequence spans 914 residues: TRPM8 channel-associated factor 2 (914 aa).

The Peptidase M60 domain occupies 541–840 (DAWMSTGLNL…TYLQLQEAFG (300 aa)).

This sequence belongs to the TCAF family. Interacts with TRPM8 (via N-terminus and C-terminus domains); the interaction inhibits TRPM8 channel activity. Interacts with TRPV6.

It is found in the cell membrane. Functionally, negatively regulates the plasma membrane cation channel TRPM8 activity. Involved in the recruitment of TRPM8 to the cell surface. Promotes prostate cancer cell migration stimulation in a TRPM8-dependent manner. This chain is TRPM8 channel-associated factor 2, found in Bos taurus (Bovine).